The primary structure comprises 529 residues: Retinoic acid-induced protein 2 (529 aa).

2 disordered regions span residues 1 to 21 (MDDL…PTLA) and 400 to 419 (SHSS…HPGS). The span at 407-416 (GTEMVSQPSH) shows a compositional bias: polar residues.

The polypeptide is Retinoic acid-induced protein 2 (Rai2) (Mus musculus (Mouse)).